Consider the following 420-residue polypeptide: Gamma-glutamyl phosphate reductase (420 aa).

This sequence belongs to the gamma-glutamyl phosphate reductase family.

The protein resides in the cytoplasm. The enzyme catalyses L-glutamate 5-semialdehyde + phosphate + NADP(+) = L-glutamyl 5-phosphate + NADPH + H(+). Its pathway is amino-acid biosynthesis; L-proline biosynthesis; L-glutamate 5-semialdehyde from L-glutamate: step 2/2. Its function is as follows. Catalyzes the NADPH-dependent reduction of L-glutamate 5-phosphate into L-glutamate 5-semialdehyde and phosphate. The product spontaneously undergoes cyclization to form 1-pyrroline-5-carboxylate. This chain is Gamma-glutamyl phosphate reductase, found in Oenococcus oeni (strain ATCC BAA-331 / PSU-1).